A 142-amino-acid polypeptide reads, in one-letter code: Small ribosomal subunit protein uS12 (142 aa).

The protein belongs to the universal ribosomal protein uS12 family. Part of the 30S ribosomal subunit.

In terms of biological role, with S4 and S5 plays an important role in translational accuracy. Located at the interface of the 30S and 50S subunits. This is Small ribosomal subunit protein uS12 from Thermoplasma acidophilum (strain ATCC 25905 / DSM 1728 / JCM 9062 / NBRC 15155 / AMRC-C165).